A 273-amino-acid chain; its full sequence is Putative carboxypeptidase YodJ (273 aa).

Positions 1 to 23 are cleaved as a signal peptide; that stretch reads MKKSGKWFSLAAALSVTAIVGAG. Cys-24 carries N-palmitoyl cysteine lipidation. A lipid anchor (S-diacylglycerol cysteine) is attached at Cys-24. Residues 27–58 form a disordered region; the sequence is SNGDAQKDTKTTAETKQTEQKTADSKKSNTQN. Residues 31–53 are compositionally biased toward basic and acidic residues; it reads AQKDTKTTAETKQTEQKTADSKK.

Belongs to the peptidase M15B family.

The protein resides in the cell membrane. The sequence is that of Putative carboxypeptidase YodJ (yodJ) from Bacillus subtilis (strain 168).